A 176-amino-acid chain; its full sequence is Sigma intracellular receptor 2 (176 aa).

The Cytoplasmic segment spans residues methionine 1–cysteine 9. The helical transmembrane segment at valine 10–leucine 30 threads the bilayer. Positions valine 10–leucine 158 constitute an EXPERA domain. Residues glutamine 31–serine 68 are Lumenal-facing. A helical transmembrane segment spans residues phenylalanine 69 to phenylalanine 89. Valine 75 and glutamine 77 together coordinate cholesterol. At lysine 90–proline 99 the chain is on the cytoplasmic side. Residues alanine 100 to phenylalanine 120 traverse the membrane as a helical segment. Over glutamate 121 to arginine 140 the chain is Lumenal. A helical membrane pass occupies residues leucine 141–methionine 161. The Cytoplasmic portion of the chain corresponds to leucine 162 to lysine 176. The ER retention motif motif lies at lysine 172–lysine 176.

It belongs to the TMEM97/sigma-2 receptor family. As to quaternary structure, homodimer. Interacts with NPC1; the interaction impairs NPC1-mediated cholesterol transport. Interacts with PGRMC1 and LDLR; the interaction increases LDL internalization. Interacts with histatin 1/HTN1; the interaction induces HTN1-stimulating wound healing. Interacts with TSPO.

The protein resides in the rough endoplasmic reticulum membrane. It localises to the nucleus membrane. Its function is as follows. Sigma-2 receptor which contributes to ameliorate dysfunctional cellular processes and slow degenerative progression by regulating cell functions including cholesterol biosynthesis/trafficking, membrane trafficking, autophagy, lipid membrane-bound protein trafficking, and receptor stabilization at the cell surface. Forms a ternary complex with PGRMC1 receptor and low density lipoprotein receptor/LDLR at the plasma membrane, which increases LDLR-mediated LDL cholesterol internalization. Decreases lysosomal sterol transporter NPC1 availability to the cell, probably through NPC1-binding, hence controlling lipid transport, including cholesterol and LBPA, outside of late endosome/lysosome. Binds regio- and stereoselective ligand 20(S)-hydroxycholesterol (20(S)-OHC) which enhances TMEM97-NPC1 interaction and decreases TMEM97-PGRMC1 and TMEM97-TSPO interactions, thereby linking OHC binding to cholesterol homeostasis. Also able to bind cholesterol. Binds histatin 1 (Hst 1)/HN1 salivary peptide at the ER membrane, which is critical for increasing mitochondria-ER contacts and stimulating Hst1 wound healing properties. May alter the activity of some cytochrome P450 proteins. Although shows homologies with sterol isomerases (EXPERA domain), not able to catalyze sterol isomerization. However, may act as sensors of these molecules. Acts as a quality control factor in the ER, promoting the proteolytic degradation of nonproductive and extramitochondrial precursor proteins in the ER membrane thus removing them from the ER surface. The sequence is that of Sigma intracellular receptor 2 from Mus musculus (Mouse).